A 60-amino-acid polypeptide reads, in one-letter code: Toxin FS-2 (60 aa).

Disulfide bonds link Cys-3-Cys-22, Cys-17-Cys-39, Cys-41-Cys-52, and Cys-53-Cys-58. The interval 41 to 48 (CPTAMWPY) is important for binding to L-type calcium channels.

It belongs to the three-finger toxin family. Short-chain subfamily. L-type calcium blocker sub-subfamily. In terms of tissue distribution, expressed by the venom gland.

The protein resides in the secreted. In terms of biological role, specific blocker of the voltage-dependent L-type calcium channel (Cav1/CACNA1). Inhibits cardiac contractions. The sequence is that of Toxin FS-2 from Dendroaspis polylepis polylepis (Black mamba).